The sequence spans 156 residues: Small ribosomal subunit protein uS7 (156 aa).

It belongs to the universal ribosomal protein uS7 family. Part of the 30S ribosomal subunit. Contacts proteins S9 and S11.

One of the primary rRNA binding proteins, it binds directly to 16S rRNA where it nucleates assembly of the head domain of the 30S subunit. Is located at the subunit interface close to the decoding center, probably blocks exit of the E-site tRNA. This is Small ribosomal subunit protein uS7 from Clostridium botulinum (strain Okra / Type B1).